Reading from the N-terminus, the 157-residue chain is Phosphopantetheine adenylyltransferase (157 aa).

Belongs to the eukaryotic CoaD family.

It localises to the cytoplasm. The enzyme catalyses (R)-4'-phosphopantetheine + ATP + H(+) = 3'-dephospho-CoA + diphosphate. Its pathway is cofactor biosynthesis; coenzyme A biosynthesis. Its function is as follows. Reversibly transfers an adenylyl group from ATP to 4'-phosphopantetheine, yielding dephospho-CoA (dPCoA) and pyrophosphate. This Methanopyrus kandleri (strain AV19 / DSM 6324 / JCM 9639 / NBRC 100938) protein is Phosphopantetheine adenylyltransferase.